Here is a 273-residue protein sequence, read N- to C-terminus: Imidazole glycerol phosphate synthase subunit HisF (273 aa).

Residues aspartate 11 and aspartate 134 contribute to the active site.

The protein belongs to the HisA/HisF family. In terms of assembly, heterodimer of HisH and HisF.

The protein resides in the cytoplasm. The catalysed reaction is 5-[(5-phospho-1-deoxy-D-ribulos-1-ylimino)methylamino]-1-(5-phospho-beta-D-ribosyl)imidazole-4-carboxamide + L-glutamine = D-erythro-1-(imidazol-4-yl)glycerol 3-phosphate + 5-amino-1-(5-phospho-beta-D-ribosyl)imidazole-4-carboxamide + L-glutamate + H(+). Its pathway is amino-acid biosynthesis; L-histidine biosynthesis; L-histidine from 5-phospho-alpha-D-ribose 1-diphosphate: step 5/9. Its function is as follows. IGPS catalyzes the conversion of PRFAR and glutamine to IGP, AICAR and glutamate. The HisF subunit catalyzes the cyclization activity that produces IGP and AICAR from PRFAR using the ammonia provided by the HisH subunit. In Methanococcoides burtonii (strain DSM 6242 / NBRC 107633 / OCM 468 / ACE-M), this protein is Imidazole glycerol phosphate synthase subunit HisF.